We begin with the raw amino-acid sequence, 318 residues long: MSRPIILDCDPGHDDAIALILALAHPELTPLAVTTSAGNQTPDKTLNNALRILTLLNRSDIPVAGGAVKPLSRELMIADNVHGETGLDGPALPAPSFQPQAVNAVELMAEKIRQSDKPVTLVPTGPLTNIALLLASHAELHAKIERIVLMGGAAGVGNWTPAAEFNIFVDPEAADIVFKSGIPITMCGLDVTHQAQIMDEDIERIRAIANPVAKCVAELLDFFMIYHRDPKWGFVGAPLHDPCTIAWLLNPALFDAQDCWVGIETQSELTLGMTVVDRYQLTGKPANATVLFGIDRQGFVDLLVDSLAVYTPTYLNRR.

The active site involves histidine 240.

Belongs to the IUNH family. RihA subfamily.

In terms of biological role, hydrolyzes cytidine or uridine to ribose and cytosine or uracil, respectively. The chain is Pyrimidine-specific ribonucleoside hydrolase RihA from Shewanella sp. (strain ANA-3).